Reading from the N-terminus, the 579-residue chain is SHC-transforming protein 1 (579 aa).

M1 is subject to N-acetylmethionine. The disordered stretch occupies residues 1-137 (MDLLPPKPKY…QLGGEEWTRH (137 aa)). Residues 16-44 (ESLSSLEEGASGSTPPEELPSPSASSLGP) are compositionally biased toward low complexity. 2 positions are modified to phosphoserine: S36 and S139. Residue K154 is modified to N6-acetyllysine. Positions 156–339 (MGPGVSYLVR…AGFDGSAWDE (184 aa)) constitute a PID domain. The tract at residues 337–357 (WDEEEEEPPDHQYYNDFPGKE) is disordered. The interval 340–483 (EEEEPPDHQY…SMAEQLQGEP (144 aa)) is CH1. 3 positions are modified to phosphotyrosine: Y349, Y350, and Y423. A disordered region spans residues 432 to 451 (ARQAGGGAGPPNPSLNGSAP). At S449 the chain carries Phosphoserine. The SH2 domain maps to 484–575 (WFHGKLSRRE…GSELCLQQPV (92 aa)).

As to quaternary structure, interacts with CPNE3; this interaction may mediate the binding of CPNE3 with ERBB2. Interacts with the NPXY motif of tyrosine-phosphorylated IGF1R and INSR in vitro via the PID domain. Once activated, binds to GRB2. Interacts with tyrosine-phosphorylated DDR2 and CD3T. Interacts with the N-terminal region of APS. Interacts with GRB7 and KIT. Interacts with PTK2/FAK1. Interacts with phosphorylated LRP1 and IRS4. Interacts with FLT4 (tyrosine-phosphorylated). Interacts with PDGFRB (tyrosine-phosphorylated). Interacts with ERBB4. Interacts with TEK/TIE2 (tyrosine-phosphorylated). Interacts with ALK, GAB2, TRIM31, INPP5D/SHIP1 and INPPL1/SHIP2. Interacts with PTPN6/SHP (tyrosine phosphorylated). Identified in a complex containing FGFR4, NCAM1, CDH2, PLCG1, FRS2, SRC, SHC1, GAP43 and CTTN. Interacts with EPHB1 and GRB2; activates the MAPK/ERK cascade to regulate cell migration. Interacts with the Trk receptors NTRK1, NTRK2 and NTRK3; in a phosphotyrosine-dependent manner. Interacts with CEACAM1; this interaction is CEACAM1-phosphorylation-dependent and mediates interaction with EGFR or INSR resulting in decrease coupling of SHC1 to the MAPK3/ERK1-MAPK1/ERK2 pathway. Interacts (via PID domain) with PEAK1 (when phosphorylated at 'Tyr-1177'). Found in a complex with PPP1CA, PPP1CC, SHC1 and PEAK1. Phosphorylated in response to FLT4 signaling. Tyrosine phosphorylated by ligand-activated PDGFRB. May be tyrosine phosphorylated by activated PTK2/FAK1. Tyrosine phosphorylated by TEK/TIE2. Tyrosine phosphorylated by activated PTK2B/PYK2. Dephosphorylation by PTPN2 may regulate interaction with GRB2. Phosphorylated by activated epidermal growth factor receptor. Phosphorylated in response to KIT signaling. Isoform p47Shc and isoform p52Shc are phosphorylated on tyrosine residues of the Pro-rich domain. Isoform p66Shc is phosphorylated on Ser-36 by PRKCB upon treatment with insulin, hydrogen peroxide or irradiation with ultraviolet light. FLT3 signaling promotes tyrosine phosphorylation of isoform p47Shc and isoform p52Shc. Also tyrosine phosphorylated by ligand-activated ALK. Widely expressed. Expressed in neural stem cells but absent in mature neurons.

It localises to the cytoplasm. The protein localises to the cell junction. The protein resides in the focal adhesion. Its subcellular location is the mitochondrion matrix. It is found in the mitochondrion. Functionally, signaling adapter that couples activated growth factor receptors to signaling pathways. Participates in signaling downstream of the angiopoietin receptor TEK/TIE2, and plays a role in the regulation of endothelial cell migration and sprouting angiogenesis. Participates in a signaling cascade initiated by activated KIT and KITLG/SCF. Isoform p47Shc and isoform p52Shc, once phosphorylated, couple activated receptor kinases to Ras via the recruitment of the GRB2/SOS complex and are implicated in the cytoplasmic propagation of mitogenic signals. Isoform p47Shc and isoform p52 may thus function as initiators of the Ras signaling cascade in various non-neuronal systems. Isoform p66Shc does not mediate Ras activation, but is involved in signal transduction pathways that regulate the cellular response to oxidative stress and life span. Isoform p66Shc acts as a downstream target of the tumor suppressor p53 and is indispensable for the ability of stress-activated p53 to induce elevation of intracellular oxidants, cytochrome c release and apoptosis. The expression of isoform p66Shc has been correlated with life span. In Mus musculus (Mouse), this protein is SHC-transforming protein 1 (Shc1).